The chain runs to 767 residues: MTEKITPEVVAQHGLTQAEYDEVKRHLGREPNLTELGVFSVMWSEHCSYKSSRVHLKTFPTSGPRVLQGPGENAGVVDLGDGLAAAFKMESHNHPSYIEPYQGAATGVGGILRDVFTMGARPIASANSLRFGDPSHPKTAYLLEGVVAGIGGYGNCMGVPTVAGEVMFHPSYNGNCLVNAFTLGILPADKIFLGTAAGVGNPVMYIGAKTGRDGIHGATMASAEFDASTEEKRPTVQVGDPFMEKLLLEACLELFKTDAVVGIQDMGAAGFTSSSVEMAGRAGNGLDLFLDQVPLREEGMTPYEILLSESQERMLLVAAEGKEDMVRKICTKWDLDVAIVGRVTGTGRWRAHWHGKVVADLPVDPLTEGAPKYQRPMTPHPALPALHAFDLSTVPEPADLGDTLLRLLARPTIASKEWVYQQYDHMVRLVGAVRPGGDAAVVRIATGDERHAGKGIAISVGANGRYCFLDPHLGAQHAVAECARNIACVGGEPIAVTDCLNFGNPEKPEIMWQFAECVRGIGDACRALGTPVVSGNVSLYNETEGQGILPTPTIGMVGLLPDVEKTCTSAFKNAGDVIALVGTLQGEVGGSEYLSAEHGREAGHPPALDLAKEKAVQETVRRAVREGLLSSAHDCSDGGLAVALAECCMMHGVPAGAEKAPWIGAAVRVPFPARKDFVLFGEDASRILVSMPKESAARFVALAQECGAPVIRLGAVGGDTLEIQGALSVPVAELAKAWRDGVPAVLRRDVGHAAASGIAREPQEPLP.

The active site involves His46. Residues Tyr49 and Lys88 each contribute to the ATP site. Position 90 (Glu90) interacts with Mg(2+). Residues Ser91–His94 and Arg113 each bind substrate. The active-site Proton acceptor is the His92. Asp114 contributes to the Mg(2+) binding site. Gln237 serves as a coordination point for substrate. A Mg(2+)-binding site is contributed by Asp265. Glu309–Gln311 contacts substrate. ATP-binding residues include Asp498 and Gly535. Position 536 (Asn536) interacts with Mg(2+). Residue Ser538 coordinates substrate.

This sequence belongs to the FGAMS family. As to quaternary structure, monomer. Part of the FGAM synthase complex composed of 1 PurL, 1 PurQ and 2 PurS subunits.

The protein resides in the cytoplasm. It carries out the reaction N(2)-formyl-N(1)-(5-phospho-beta-D-ribosyl)glycinamide + L-glutamine + ATP + H2O = 2-formamido-N(1)-(5-O-phospho-beta-D-ribosyl)acetamidine + L-glutamate + ADP + phosphate + H(+). It functions in the pathway purine metabolism; IMP biosynthesis via de novo pathway; 5-amino-1-(5-phospho-D-ribosyl)imidazole from N(2)-formyl-N(1)-(5-phospho-D-ribosyl)glycinamide: step 1/2. Its function is as follows. Part of the phosphoribosylformylglycinamidine synthase complex involved in the purines biosynthetic pathway. Catalyzes the ATP-dependent conversion of formylglycinamide ribonucleotide (FGAR) and glutamine to yield formylglycinamidine ribonucleotide (FGAM) and glutamate. The FGAM synthase complex is composed of three subunits. PurQ produces an ammonia molecule by converting glutamine to glutamate. PurL transfers the ammonia molecule to FGAR to form FGAM in an ATP-dependent manner. PurS interacts with PurQ and PurL and is thought to assist in the transfer of the ammonia molecule from PurQ to PurL. This chain is Phosphoribosylformylglycinamidine synthase subunit PurL, found in Anaeromyxobacter sp. (strain Fw109-5).